Reading from the N-terminus, the 127-residue chain is Small ribosomal subunit protein uS11 (127 aa).

The protein belongs to the universal ribosomal protein uS11 family. In terms of assembly, part of the 30S ribosomal subunit. Interacts with proteins S7 and S18. Binds to IF-3.

Functionally, located on the platform of the 30S subunit, it bridges several disparate RNA helices of the 16S rRNA. Forms part of the Shine-Dalgarno cleft in the 70S ribosome. The sequence is that of Small ribosomal subunit protein uS11 from Rickettsia felis (strain ATCC VR-1525 / URRWXCal2) (Rickettsia azadi).